Consider the following 143-residue polypeptide: Large ribosomal subunit protein uL13 (143 aa).

The protein belongs to the universal ribosomal protein uL13 family. In terms of assembly, part of the 50S ribosomal subunit.

This protein is one of the early assembly proteins of the 50S ribosomal subunit, although it is not seen to bind rRNA by itself. It is important during the early stages of 50S assembly. The protein is Large ribosomal subunit protein uL13 of Albidiferax ferrireducens (strain ATCC BAA-621 / DSM 15236 / T118) (Rhodoferax ferrireducens).